The sequence spans 528 residues: Chaperonin GroEL, chloroplastic (528 aa).

ATP is bound by residues 29–32, 86–90, glycine 414, and aspartate 496; these read TLGP and DGTTT.

The protein belongs to the chaperonin (HSP60) family. Forms a cylinder of 14 subunits composed of two heptameric rings stacked back-to-back. Interacts with the co-chaperonin GroES.

The protein resides in the plastid. It is found in the chloroplast. The catalysed reaction is ATP + H2O + a folded polypeptide = ADP + phosphate + an unfolded polypeptide.. Its function is as follows. Together with its co-chaperonin GroES, plays an essential role in assisting protein folding. The GroEL-GroES system forms a nano-cage that allows encapsulation of the non-native substrate proteins and provides a physical environment optimized to promote and accelerate protein folding. This is Chaperonin GroEL, chloroplastic from Gracilaria tenuistipitata var. liui (Red alga).